A 525-amino-acid chain; its full sequence is Sterol O-acyltransferase 2 (525 aa).

Disordered regions lie at residues 1–34 and 77–97; these read MQPK…THGT and QDRP…ELHP. Residues 1 to 119 lie on the Cytoplasmic side of the membrane; that stretch reads MQPKVPQLRR…IDELMEVQHF (119 aa). The segment covering 9-23 has biased composition (basic and acidic residues); that stretch reads RRREGLGEEQEKGAR. His118 lines the cholesterol pocket. A helical membrane pass occupies residues 120–141; the sequence is RTIYHMFIAGLCVLIISTLAID. The Lumenal segment spans residues 142-161; that stretch reads FIDEGRLMLEFDLLLFSFGQ. The chain crosses the membrane as a helical span at residues 162-187; that stretch reads LPLALMTWVPMFLSTLLVPYQTLWLW. The Cytoplasmic segment spans residues 188–199; that stretch reads ARPRAGGAWMLG. Residues 200 to 223 traverse the membrane as a helical segment; the sequence is ASLGCVLLAAHAVVLCVLPVHVSV. The Lumenal segment spans residues 224 to 231; sequence RHELPPAS. The helical transmembrane segment at 232-255 threads the bilayer; it reads RCVLVFEQVRLLMKSYSFLRETVP. Over 256 to 296 the chain is Cytoplasmic; the sequence is GIFCVRGGKGISPPSFSSYLYFLFCPTLIYRETYPRTPSIR. The residue at position 280 (Cys280) is a Cysteine sulfenic acid (-SOH); alternate. Cys280 participates in a covalent cross-link: Glycyl cysteine thioester (Cys-Gly) (interchain with G-Cter in ubiquitin); alternate. The helical transmembrane segment at 297 to 329 threads the bilayer; it reads WNYVAKNFAQVLGCLLYACFILGRLCVPVFANM. At 330–346 the chain is on the lumenal side; it reads SREPFSTRALLLSILHA. A helical membrane pass occupies residues 347–372; that stretch reads TGPGIFMLLLIFFAFLHCWLNAFAEM. At 373–420 the chain is on the cytoplasmic side; sequence LRFGDRMFYRDWWNSTSFSNYYRTWNVVVHDWLYSYVYQDGLWLLGRR. The short motif at 380–386 is the FYXDWWN motif element; sequence FYRDWWN. Residues Asn392, Arg395, Asn398, His402, Tyr410, and Ser433 each contribute to the an acyl-CoA site. Residues 421–445 traverse the membrane as a helical segment; sequence ARGVAMLGVFLVSAVVHEYIFCFVL. The active site involves His437. Topologically, residues 446-451 are lumenal; the sequence is GFFYPV. A helical transmembrane segment spans residues 452–467; that stretch reads MLMLFLVFGGLLNFTM. Residues 468–473 lie on the Cytoplasmic side of the membrane; sequence NDRHTG. The chain crosses the membrane as a helical span at residues 474-505; sequence PAWNILMWTFLFMGQGIQVSLYCQEWYARRHC. Residues 506 to 525 lie on the Lumenal side of the membrane; the sequence is PLPQTTFWGMVTPRSWSCHP.

Belongs to the membrane-bound acyltransferase family. Sterol o-acyltransferase subfamily. May form homo- or heterodimers. Interacts with INSIG1; the interaction is direct and promotes association with AMFR/gp78. Polyubiquitinated by AMFR/gp78 at Cys-280, leading to its degradation when the lipid levels are low. Association with AMFR/gp78 is mediated via interaction with INSIG1. High concentration of cholesterol and fatty acid results in Cys-280 oxidation, preventing ubiquitination at the same site, resulting in protein stabilization. In terms of processing, oxidized at Cys-280: high concentration of cholesterol and fatty acid induce reactive oxygen species, which oxidizes Cys-280, preventing ubiquitination at the same site, and resulting in protein stabilization.

The protein localises to the endoplasmic reticulum membrane. It carries out the reaction a sterol + a long-chain fatty acyl-CoA = a long-chain 3-hydroxysterol ester + CoA. The enzyme catalyses cholesterol + an acyl-CoA = a cholesterol ester + CoA. It catalyses the reaction cholesterol + (9Z)-octadecenoyl-CoA = cholesteryl (9Z-octadecenoate) + CoA. The catalysed reaction is (5Z,8Z,11Z,14Z,17Z)-eicosapentaenoyl-CoA + cholesterol = (5Z,8Z,11Z,14Z,17Z-eicosapentaenoyl)-cholesterol + CoA. It carries out the reaction (9Z,12Z,15Z)-octadecatrienoyl-CoA + cholesterol = (9Z,12Z,15Z-octadecatrienoyl)-cholesterol + CoA. The enzyme catalyses (5Z,8Z,11Z,14Z)-eicosatetraenoyl-CoA + cholesterol = cholesteryl (5Z,8Z,11Z,14Z)-eicosatetraenoate + CoA. In terms of biological role, catalyzes the formation of fatty acid-cholesterol esters, which are less soluble in membranes than cholesterol. Plays a role in lipoprotein assembly and dietary cholesterol absorption. Utilizes oleoyl-CoA ((9Z)-octadecenoyl-CoA) and linolenoyl-CoA ((9Z,12Z,15Z)-octadecatrienoyl-CoA) as substrates. May provide cholesteryl esters for lipoprotein secretion from hepatocytes and intestinal mucosa. In Mus musculus (Mouse), this protein is Sterol O-acyltransferase 2.